A 238-amino-acid chain; its full sequence is Probable transcriptional regulatory protein M6_Spy0297 (238 aa).

The protein belongs to the TACO1 family. YeeN subfamily.

Its subcellular location is the cytoplasm. This Streptococcus pyogenes serotype M6 (strain ATCC BAA-946 / MGAS10394) protein is Probable transcriptional regulatory protein M6_Spy0297.